A 383-amino-acid chain; its full sequence is Large ribosomal subunit protein uL2m (383 aa).

2 disordered regions span residues 97 to 122 and 322 to 357; these read FPKK…GGGH and MNAN…YKTR. 2 stretches are compositionally biased toward basic residues: residues 106–122 and 330–340; these read GRNH…GGGH and GGGRGKSKGNR.

This sequence belongs to the universal ribosomal protein uL2 family. In terms of assembly, component of the mitochondrial large ribosomal subunit (mt-LSU). Mature N.crassa 74S mitochondrial ribosomes consist of a small (37S) and a large (54S) subunit. The 37S small subunit contains a 16S ribosomal RNA (16S mt-rRNA) and 32 different proteins. The 54S large subunit contains a 23S rRNA (23S mt-rRNA) and 42 different proteins.

The protein resides in the mitochondrion. Functionally, component of the mitochondrial ribosome (mitoribosome), a dedicated translation machinery responsible for the synthesis of mitochondrial genome-encoded proteins, including at least some of the essential transmembrane subunits of the mitochondrial respiratory chain. The mitoribosomes are attached to the mitochondrial inner membrane and translation products are cotranslationally integrated into the membrane. The sequence is that of Large ribosomal subunit protein uL2m (rml2) from Neurospora crassa (strain ATCC 24698 / 74-OR23-1A / CBS 708.71 / DSM 1257 / FGSC 987).